The chain runs to 442 residues: Ankyrin repeat and MYND domain-containing protein 2 (442 aa).

3 ANK repeats span residues 45-74, 79-108, and 159-188; these read NGMTPLMHAAYKGKLDMCKLLLRHGADVNC, HGYTALMFAALSGNKDITWVMLEAGAETDV, and KLAGPLHKIITTTNLHPVKIVMLINENPLL. Zn(2+) contacts are provided by cysteine 320, cysteine 323, cysteine 332, cysteine 335, cysteine 341, cysteine 345, histidine 353, and cysteine 357. The MYND-type zinc-finger motif lies at 320–357; the sequence is CTTCGEKGASKRCSVCKMVIYCDQTCQKTHWFAHKKIC. Residues 401 to 421 are compositionally biased toward basic and acidic residues; that stretch reads TRICQKNDNPKDSEEGEKESL. The disordered stretch occupies residues 401-442; the sequence is TRICQKNDNPKDSEEGEKESLQSDAGLEGLQEAAVGPQVSEE.

Interacts with the retinal-specific guanylyl cyclase GC1.

The protein resides in the cell projection. It localises to the cilium. Its function is as follows. May be involved in the trafficking of signaling proteins to the cilia. This chain is Ankyrin repeat and MYND domain-containing protein 2 (ANKMY2), found in Bos taurus (Bovine).